We begin with the raw amino-acid sequence, 252 residues long: 5-oxoprolinase subunit A (252 aa).

The protein belongs to the LamB/PxpA family. Forms a complex composed of PxpA, PxpB and PxpC.

It catalyses the reaction 5-oxo-L-proline + ATP + 2 H2O = L-glutamate + ADP + phosphate + H(+). Catalyzes the cleavage of 5-oxoproline to form L-glutamate coupled to the hydrolysis of ATP to ADP and inorganic phosphate. The protein is 5-oxoprolinase subunit A of Staphylococcus carnosus (strain TM300).